The sequence spans 282 residues: E3 ubiquitin-protein ligase SIAH1 (282 aa).

The span at 1 to 17 (MSRQTATALPTGTSKCP) shows a compositional bias: polar residues. The segment at 1-22 (MSRQTATALPTGTSKCPPSQRV) is disordered. The residue at position 19 (serine 19) is a Phosphoserine; by ATM and ATR. Residues 41-76 (CPVCFDYVLPPILQCQSGHLVCSNCRPKLTCCPTCR) form an RING-type zinc finger. The SBD stretch occupies residues 90-282 (VANSVLFPCK…LGINVTISMC (193 aa)). The SIAH-type zinc finger occupies 93–153 (SVLFPCKYAS…VMPHLMHQHK (61 aa)). Zn(2+)-binding residues include cysteine 98, cysteine 105, histidine 117, cysteine 121, cysteine 128, cysteine 135, histidine 147, and histidine 152.

The protein belongs to the SINA (Seven in absentia) family. In terms of assembly, homodimer. Component of some large E3 complex composed of UBE2D1, SIAH1, CACYBP/SIP, SKP1, APC and TBL1X. Interacts with UBE2I. Interacts with alpha-tubulin. Interacts with PEG10, which may inhibit its activity. Interacts with PEG3 and HIPK2. Interacts with group 1 glutamate receptors GRM1 and GRM5. Interacts with DAB1, which may inhibit its activity. Interacts with UBE2E2. Interacts with SNCAIP. Interacts with HIPK2; the interaction is promoted by DAZAP2 and results in SIAH1-mediated ubiquitination and subsequent proteasomal degradation of HIPK2. Interacts with DAZAP2; the interaction is decreased following phosphorylation of DAZAP2 by HIPK2. Interacts with GAPDH; leading to stabilize SIAH1. Interacts with Bassoon/BSN and Piccolo/PLCO; these interactions negatively regulate SIAH1 E3 ligase activity. Interacts with DCC. Interacts with AXIN1; catalyzes AXIN1 ubiquitination and subsequent proteasome-mediated ubiquitin-dependent degradation. In terms of processing, phosphorylated on Ser-19 by ATM and ATR. This phosphorylation disrupts SIAH1 interaction with HIPK2, and subsequent proteasomal degradation of HIPK2.

The protein resides in the cytoplasm. The protein localises to the nucleus. The enzyme catalyses S-ubiquitinyl-[E2 ubiquitin-conjugating enzyme]-L-cysteine + [acceptor protein]-L-lysine = [E2 ubiquitin-conjugating enzyme]-L-cysteine + N(6)-ubiquitinyl-[acceptor protein]-L-lysine.. The protein operates within protein modification; protein ubiquitination. Its function is as follows. E3 ubiquitin-protein ligase that mediates ubiquitination and subsequent proteasomal degradation of target proteins. E3 ubiquitin ligases accept ubiquitin from an E2 ubiquitin-conjugating enzyme in the form of a thioester and then directly transfers the ubiquitin to targeted substrates. Mediates E3 ubiquitin ligase activity either through direct binding to substrates or by functioning as the essential RING domain subunit of larger E3 complexes. Triggers the ubiquitin-mediated degradation of many substrates, including proteins involved in transcription regulation (ELL2, MYB, POU2AF1, PML and RBBP8), a cell surface receptor (DCC), cytoplasmic signal transduction molecules (KLF10/TIEG1 and NUMB), an antiapoptotic protein (BAG1), a microtubule motor protein (KIF22), a protein involved in synaptic vesicle function in neurons (SYP), a structural protein (CTNNB1) and SNCAIP. Confers constitutive instability to HIPK2 through proteasomal degradation. It is thereby involved in many cellular processes such as apoptosis, tumor suppression, cell cycle, axon guidance, transcription, spermatogenesis and TNF-alpha signaling. Has some overlapping function with SIAH2. Induces apoptosis in cooperation with PEG3. Upon nitric oxid (NO) generation that follows apoptotic stimulation, interacts with S-nitrosylated GAPDH, mediating the translocation of GAPDH to the nucleus. GAPDH acts as a stabilizer of SIAH1, facilitating the degradation of nuclear proteins. Mediates ubiquitination and degradation of EGLN2 and EGLN3 in response to the unfolded protein response (UPR), leading to their degradation and subsequent stabilization of ATF4. Also part of the Wnt signaling pathway in which it mediates the Wnt-induced ubiquitin-mediated proteasomal degradation of AXIN1. This chain is E3 ubiquitin-protein ligase SIAH1 (Siah1), found in Rattus norvegicus (Rat).